We begin with the raw amino-acid sequence, 474 residues long: MSRLVVVSNRIALPDDKKSSAGGLAVGILGALRAAGGLWFGWSGEIGDDQQPLKQVSRGNISWASFNLNERDHDEYYNQFSNAVLWPAFHYRLDLVSFQREAWEGYLRVNAMLADKLLPLIEPDDTLWIHDYHLLPFASELRKRGVNNRIGFFLHIPFPTPEIFNALPPHAELLEQLCDYDLLGFQTESDRTAFLDSIAMQTRLSDLGDKRYQAWGKAFSTEVYPIGIDPDEITRNAKGPLPPKLAQLKNELKNVKNIFSVERLDYSKGLPERFLAYETLLEKYPQHHGKIRYTQIAPTSRGDVQAYQDIRHQLETAAGRINGQFGQLGWTPLYYLNQHFDRKLLMKVFRYSDVGLVTPLRDGMNLVAKEYVAAQDPDNPGVLVLSQFAGAAQELTSALIVNPYDRDEVAAALDRALSMPLAERIARHSAMLDVIRENDIHNWQARFVEDLQHISPRSEESRLRGKIATFPKLA.

R10 contacts D-glucose 6-phosphate. 22-23 (GG) lines the UDP-alpha-D-glucose pocket. 2 residues coordinate D-glucose 6-phosphate: Y77 and D131. Residues R263 and K268 each contribute to the UDP-alpha-D-glucose site. Residue R301 coordinates D-glucose 6-phosphate. Residues F340 and 366-370 (LVAKE) each bind UDP-alpha-D-glucose.

This sequence belongs to the glycosyltransferase 20 family. In terms of assembly, homotetramer.

The catalysed reaction is D-glucose 6-phosphate + UDP-alpha-D-glucose = alpha,alpha-trehalose 6-phosphate + UDP + H(+). The protein operates within glycan biosynthesis; trehalose biosynthesis. Its function is as follows. Probably involved in the osmoprotection via the biosynthesis of trehalose. Catalyzes the transfer of glucose from UDP-alpha-D-glucose (UDP-Glc) to D-glucose 6-phosphate (Glc-6-P) to form trehalose-6-phosphate. Acts with retention of the anomeric configuration of the UDP-sugar donor. The chain is Trehalose-6-phosphate synthase from Klebsiella pneumoniae subsp. pneumoniae (strain ATCC 700721 / MGH 78578).